A 270-amino-acid chain; its full sequence is MNWIGKLIGMMLGFILAGPIGLIIGLFIGHVVFDQGRFRQWFQTTASARSQPSKIQEVFFNTTFRVMGFVAKADGRVSENEIRQARQVMQQMNLDDSMKREAIRLFTEGKQPNFNLDESLNELRQACVFQPALLRVFLEIQIQMASADGQGLSGQKRQVLQTICRRLEVFGFDYNQFEQRFRAEQNYQRYQQRATQDPRAYLNDAYKVLGLTSAATDSEIKKSYRRLMSQHHPDKLMAKGLPPEMMKMATQKTQQIKKAYEQIRKVRSMV.

Residues 1–6 (MNWIGK) lie on the Periplasmic side of the membrane. A helical transmembrane segment spans residues 7–30 (LIGMMLGFILAGPIGLIIGLFIGH). Residues 31-270 (VVFDQGRFRQ…EQIRKVRSMV (240 aa)) lie on the Cytoplasmic side of the membrane. In terms of domain architecture, J spans 204-270 (DAYKVLGLTS…EQIRKVRSMV (67 aa)).

As to quaternary structure, homodimer.

The protein resides in the cell inner membrane. In terms of biological role, regulatory DnaK co-chaperone. Direct interaction between DnaK and DjlA is needed for the induction of the wcaABCDE operon, involved in the synthesis of a colanic acid polysaccharide capsule, possibly through activation of the RcsB/RcsC phosphotransfer signaling pathway. The colanic acid capsule may help the bacterium survive conditions outside the host. The protein is Co-chaperone protein DjlA of Coxiella burnetii (strain RSA 493 / Nine Mile phase I).